The sequence spans 912 residues: MASESDTEEFFDAPEDVHLEGGDPIGYPGKVGISALKETENSAYKVGNESTVQELKQDVSKKIIESIIEESQKVIQLEDDSLDSKGKGQSDQATASPVTAGTELSNIPGLLAIDQVLQEDSQKAESQDVSEETELESKQCFPSDDTCEKPVDETTKLTEISSTAQLNVPETVTEVLNKEEVEVKESDVLESASSHSLSTKDFAVVEEVAPAKPPRQLTPEPDIVASTKKPVPARPPPPANFPPPRPPPPSRPAPPPRKKKSELEFEALKTPDLDVPKENITSDTLLTTNMASESTVKDSQPSLDLASATSGDKIVTAQENGKAPDGQTIAGEVMGPQRPRSNSGRELTDEEILASVMIKNLDTGEEIPLSLAEEKLPTGINPLTLHIMRRTKEYVSNDAAQSDDEEKLQSQQTDTDGGRLKQKTTQLKKFLGKSVKRAKHLAEEYGERAVNKVKSVRDEVFHTDQDDPSSSDDEGMPYTRPVKFKAAHGFKGPYDFDQIKVVQDLSGEHMGAVWTMKFSHCGRLLASAGQDNVVRIWALKNAFDYFNNMRMKYNTEGRVSPSPSQESLNSSKSDTDTGVCSGTDEDPDDKNAPFRQRPFCKYKGHTADLLDLSWSKNYFLLSSSMDKTVRLWHISRRECLCCFQHIDFVTAIAFHPRDDRYFLSGSLDGKLRLWNIPDKKVALWNEVDGQTKLITAANFCQNGKYAVIGTYDGRCIFYDTEHLKYHTQIHVRSTRGRNKVGRKITGIEPLPGENKILVTSNDSRIRLYDLRDLSLSMKYKGYVNSSSQIKASFSHDFNYLVSGSEDKYVYIWSTYHDLSKFTSVRRDRNDFWEGIKAHNAVVTSAIFAPNPSLMLSLDVQSEKSEGNEKGEDAEVLETMPSGIMKTDNTEVLLSADFTGAIKVFINKRKNLS.

Over residues 1–14 (MASESDTEEFFDAP) the composition is skewed to acidic residues. The disordered stretch occupies residues 1-25 (MASESDTEEFFDAPEDVHLEGGDPI). A2 is subject to N-acetylalanine. The binding activity stretch occupies residues 2 to 170 (ASESDTEEFF…SSTAQLNVPE (169 aa)). A Phosphoserine modification is found at S3. The short motif at 9 to 15 (EFFDAPE) is the FFAT-like motif element. 6 positions are modified to phosphoserine: S50, S66, S71, S81, S96, and S126. Disordered stretches follow at residues 79-104 (DDSLDSKGKGQSDQATASPVTAGTEL) and 118-152 (QEDSQKAESQDVSEETELESKQCFPSDDTCEKPVD). Positions 89 to 104 (QSDQATASPVTAGTEL) are enriched in polar residues. At T158 the chain carries Phosphothreonine. Disordered stretches follow at residues 183 to 202 (VKESDVLESASSHSLSTKDF), 207 to 279 (EVAP…PKEN), 318 to 349 (QENGKAPDGQTIAGEVMGPQRPRSNSGRELTD), 396 to 422 (SNDAAQSDDEEKLQSQQTDTDGGRLKQ), and 457 to 479 (RDEVFHTDQDDPSSSDDEGMPYT). Residues 210-256 (PAKPPRQLTPEPDIVASTKKPVPARPPPPANFPPPRPPPPSRPAPPP) are important for interaction with ARHGAP26 AND ARHGAP10. Residue T218 is modified to Phosphothreonine. A compositionally biased stretch (pro residues) spans 232–255 (PARPPPPANFPPPRPPPPSRPAPP). S261 is subject to Phosphoserine. Residues 261-277 (SELEFEALKTPDLDVPK) show a composition bias toward basic and acidic residues. Phosphothreonine is present on T270. The interval 333 to 346 (VMGPQRPRSNSGRE) is important for interaction with RAB11A. The interaction with RAB11 stretch occupies residues 334–504 (MGPQRPRSNS…DFDQIKVVQD (171 aa)). 2 positions are modified to phosphoserine: S341 and S343. Phosphothreonine is present on T348. Phosphoserine occurs at positions 402, 469, 470, and 471. Positions 466 to 475 (DDPSSSDDEG) are enriched in acidic residues. Residue Y478 is modified to Phosphotyrosine. A WD 1 repeat occupies 508-547 (EHMGAVWTMKFSHCGRLLASAGQDNVVRIWALKNAFDYFN). Residues 556 to 592 (EGRVSPSPSQESLNSSKSDTDTGVCSGTDEDPDDKNA) form a disordered region. Residues S560 and S564 each carry the phosphoserine modification. The segment covering 560-572 (SPSPSQESLNSSK) has biased composition (low complexity). WD repeat units follow at residues 604–642 (GHTADLLDLSWSKNYFLLSSSMDKTVRLWHISRRECLCC), 644–684 (QHID…VALW), 689–728 (GQTKLITAANFCQNGKYAVIGTYDGRCIFYDTEHLKYHTQ), 739–778 (KVGRKITGIEPLPGENKILVTSNDSRIRLYDLRDLSLSMK), 783–822 (VNSSSQIKASFSHDFNYLVSGSEDKYVYIWSTYHDLSKFT), and 871–912 (EDAE…KNLS).

As to quaternary structure, interacts with the GTP-bound form of RAB11A when membrane-associated. Interacts with GRAF1/ARHGAP26 or GRAF2/ARHGAP10; the interaction connects the endoplasmic reticulum (ER) with the endosomal tubule. Interacts (via FFAT-like motif) with VAPA (via MSP domain) or VAPB (via MSP domain); the interaction connects the ER with the endosomal tubule. Does not bind to other Rab and Rho small G proteins. Post-translationally, phosphorylated by ATK1; the phosphorylation stabilizes its interaction with RAB11A and RAB11B. As to expression, highly expressed in brain.

The protein localises to the cytoplasm. The protein resides in the cytosol. Its subcellular location is the perinuclear region. It is found in the endosome membrane. It localises to the golgi apparatus. The protein localises to the trans-Golgi network. Downstream effector for Rab11 which regulates Rab11 intracellular membrane trafficking functions such as endocytic recycling, intracellular ciliogenesis and protein export. ATK1-mediated phosphorylation of WDR44 induces binding to Rab11 which activates endocytic recycling of transferrin receptor back to the plasma membrane. When bound to Rab11, prevents the formation of the ciliogenic Rab11-Rabin8/RAB3IP-RAB11FIP3 complex, therefore inhibiting preciliary trafficking and ciliogenesis. Participates in neo-synthesized protein export by connecting the endoplasmic reticulum (ER) with the endosomal tubule via direct interactions with the integral ER proteins VAPA or VAPB and the endosomal protein GRAFs (GRAF1/ARHGAP26 or GRAF2/ARHGAP10), which facilitates the transfer of proteins such as E-cadherin, MPP14 and CFTR into a Rab8-Rab10-Rab11-dependent export route. The chain is WD repeat-containing protein 44 (WDR44) from Bos taurus (Bovine).